Consider the following 428-residue polypeptide: MILIQDATINNKVQDILIEKNKIKKIGKNLIQKENLNRKDLKIIDGKNKIIIPGLVNTHTHTPMTLFRGVADDLPLMDWLNNYIWKMEANLNEKIVYDATMLGCMEMIKSGTTTFNDMYFYMNGIIKGVQETGIRAYLGYGMIDLFDEEKRENELKETVNTVENIQKLNNPKINPTVSPHAPYTCSMELLQESHNLAKKYNVPLHIHLNETIDEIKTVEEMTNKRPFEYLDSFGFFNGVKVISAHNVHLSNKEIEIIKNKNIAISHNPISNLKLASGIAPIPKLMENTVLITLGTDGCGSNNNLNLFEEIKMASLIHKGNSLNPTVVSASQSFEFATKNGANALGLNAGELVEGALADVVIIDINKPYLIPNENIYSHLVYSFNGVVDMVIIDGEIVLNNGKMVNINEEKVYENAEKSYNKLLNNSDE.

His-59 and His-61 together coordinate Zn(2+). Positions 88 and 180 each coordinate substrate. His-207 lines the Zn(2+) pocket. Substrate contacts are provided by Glu-210 and Asp-296. Asp-296 is a binding site for Zn(2+).

The protein belongs to the metallo-dependent hydrolases superfamily. MTA/SAH deaminase family. In terms of assembly, homotetramer. Requires Zn(2+) as cofactor.

It catalyses the reaction 5'-deoxyadenosine + H2O + H(+) = 5'-deoxyinosine + NH4(+). The catalysed reaction is S-adenosyl-L-homocysteine + H2O + H(+) = S-inosyl-L-homocysteine + NH4(+). It carries out the reaction S-methyl-5'-thioadenosine + H2O + H(+) = S-methyl-5'-thioinosine + NH4(+). The enzyme catalyses adenosine + H2O + H(+) = inosine + NH4(+). The protein operates within amino-acid biosynthesis; S-adenosyl-L-methionine biosynthesis. Catalyzes the deamination of three SAM-derived enzymatic products, namely 5'-deoxyadenosine, S-adenosyl-L-homocysteine, and 5'-methylthioadenosine, to produce the inosine analogs. Can also deaminate adenosine. The preferred substrate for this enzyme is 5'-deoxyadenosine, but all these substrates are efficiently deaminated. Likely functions in a S-adenosyl-L-methionine (SAM) recycling pathway from S-adenosyl-L-homocysteine (SAH) produced from SAM-dependent methylation reactions. May also be involved in the recycling of 5'-deoxyadenosine, whereupon the 5'-deoxyribose moiety of 5'-deoxyinosine is further metabolized to deoxyhexoses used for the biosynthesis of aromatic amino acids in methanogens. In Methanococcus aeolicus (strain ATCC BAA-1280 / DSM 17508 / OCM 812 / Nankai-3), this protein is 5'-deoxyadenosine deaminase.